The chain runs to 352 residues: DNA polymerase IV (352 aa).

The region spanning 6–186 (IIHIDMDAFY…LPLGKIPGVG (181 aa)) is the UmuC domain. Residues Asp10 and Asp104 each coordinate Mg(2+). Glu105 is a catalytic residue.

The protein belongs to the DNA polymerase type-Y family. In terms of assembly, monomer. Mg(2+) serves as cofactor.

It localises to the cytoplasm. It carries out the reaction DNA(n) + a 2'-deoxyribonucleoside 5'-triphosphate = DNA(n+1) + diphosphate. Poorly processive, error-prone DNA polymerase involved in untargeted mutagenesis. Copies undamaged DNA at stalled replication forks, which arise in vivo from mismatched or misaligned primer ends. These misaligned primers can be extended by PolIV. Exhibits no 3'-5' exonuclease (proofreading) activity. May be involved in translesional synthesis, in conjunction with the beta clamp from PolIII. The chain is DNA polymerase IV from Neisseria meningitidis serogroup A / serotype 4A (strain DSM 15465 / Z2491).